A 726-amino-acid polypeptide reads, in one-letter code: A-type inclusion protein A25 homolog (726 aa).

The interval 342–361 (TNTGIEEPHATGGDKEDQPI) is disordered. The segment covering 347 to 360 (EEPHATGGDKEDQP) has biased composition (basic and acidic residues). Tandem repeats lie at residues 612–634 (RELE…CTRN), 639–661 (QEVD…CIES), 667–689 (TEIS…CRGN), and 691–713 (TEIS…CRRN). The 4 X approximate tandem repeats stretch occupies residues 612–713 (RELEEERRRV…ERQLNDCRRN (102 aa)).

It belongs to the poxviridae A25 protein family. In terms of assembly, interacts (via N-terminus) with protein A26.

The protein resides in the virion. Its function is as follows. Structural protein that forms a matrix surrounding the mature virion (MV) through interaction with protein A26. Presence of protein A25 in the virion structurally prevents direct virus-cell fusion mechanism. The polypeptide is A-type inclusion protein A25 homolog (Camelus).